A 331-amino-acid polypeptide reads, in one-letter code: RNA 3'-terminal phosphate cyclase (331 aa).

ATP-binding positions include glutamine 100 and 276 to 280 (HLADQ). Catalysis depends on histidine 301, which acts as the Tele-AMP-histidine intermediate.

The protein belongs to the RNA 3'-terminal cyclase family. Type 1 subfamily.

It localises to the cytoplasm. The enzyme catalyses a 3'-end 3'-phospho-ribonucleotide-RNA + ATP = a 3'-end 2',3'-cyclophospho-ribonucleotide-RNA + AMP + diphosphate. Functionally, catalyzes the conversion of 3'-phosphate to a 2',3'-cyclic phosphodiester at the end of RNA. The mechanism of action of the enzyme occurs in 3 steps: (A) adenylation of the enzyme by ATP; (B) transfer of adenylate to an RNA-N3'P to produce RNA-N3'PP5'A; (C) and attack of the adjacent 2'-hydroxyl on the 3'-phosphorus in the diester linkage to produce the cyclic end product. The biological role of this enzyme is unknown but it is likely to function in some aspects of cellular RNA processing. This Methanosarcina barkeri (strain Fusaro / DSM 804) protein is RNA 3'-terminal phosphate cyclase.